A 444-amino-acid polypeptide reads, in one-letter code: Glutamate-1-semialdehyde 2,1-aminomutase (444 aa).

An N6-(pyridoxal phosphate)lysine modification is found at Lys267.

Belongs to the class-III pyridoxal-phosphate-dependent aminotransferase family. HemL subfamily. As to quaternary structure, homodimer. It depends on pyridoxal 5'-phosphate as a cofactor.

The protein resides in the cytoplasm. It catalyses the reaction (S)-4-amino-5-oxopentanoate = 5-aminolevulinate. The protein operates within porphyrin-containing compound metabolism; protoporphyrin-IX biosynthesis; 5-aminolevulinate from L-glutamyl-tRNA(Glu): step 2/2. This chain is Glutamate-1-semialdehyde 2,1-aminomutase, found in Xylella fastidiosa (strain Temecula1 / ATCC 700964).